The chain runs to 354 residues: Fructose-bisphosphate aldolase (354 aa).

S61 provides a ligand contact to D-glyceraldehyde 3-phosphate. Catalysis depends on D104, which acts as the Proton donor. Residues H105, D139, E169, and H221 each coordinate Zn(2+). A dihydroxyacetone phosphate-binding site is contributed by G222. H260 is a Zn(2+) binding site. Dihydroxyacetone phosphate-binding positions include G261–S263 and N282–T285.

Belongs to the class II fructose-bisphosphate aldolase family. Homodimer. It depends on Zn(2+) as a cofactor.

The catalysed reaction is beta-D-fructose 1,6-bisphosphate = D-glyceraldehyde 3-phosphate + dihydroxyacetone phosphate. Its pathway is carbohydrate degradation; glycolysis; D-glyceraldehyde 3-phosphate and glycerone phosphate from D-glucose: step 4/4. Its function is as follows. Catalyzes the aldol condensation of dihydroxyacetone phosphate (DHAP or glycerone-phosphate) with glyceraldehyde 3-phosphate (G3P) to form fructose 1,6-bisphosphate (FBP) in gluconeogenesis and the reverse reaction in glycolysis. This Campylobacter jejuni subsp. jejuni serotype O:23/36 (strain 81-176) protein is Fructose-bisphosphate aldolase (fba).